A 544-amino-acid chain; its full sequence is Cytochrome P450 monooxygenase tenB (544 aa).

Residues 13-33 (LGYYEKVTGILGVVSIILLFW) traverse the membrane as a helical segment. The segment covering 438–448 (FDPFRFSRASK) has biased composition (basic and acidic residues). The disordered stretch occupies residues 438 to 467 (FDPFRFSRASKDDDDDDDDDGRSTSSHTKD). Position 486 (Cys-486) interacts with heme.

This sequence belongs to the cytochrome P450 family. The cofactor is heme.

The protein resides in the membrane. It functions in the pathway secondary metabolite biosynthesis. Functionally, cytochrome P450 monooxygenase; part of the gene cluster that mediates the biosynthesis of tenellin-type 2-pyridones, iron-chelating compounds involved in iron stress tolerance, competition with the natural competitor fungus Metarhizium robertsii and insect hosts infection. TenB catalyzes the selective N-hydroxylation of the 2-pyridone nitrogen of yield tellinin and 15-hydroxytellenin (15-HT), respectively. The pathway begins with the assembly of the polyketide-amino acid backbone by the hybrid PKS-NRPS tenS with the help of the enoyl reductase tenC. These enzymes catalyze the synthesis of the pyrrolidine-2-dione intermediates pretellinin A, 11-hydropretellenin A, 12-hydropretellenin A, 13-hydropretellenin A, 14-hydropretellenin A, 12-oxopretellenin A and prototellinin D. The cytochrome P450 monooxygenase tenA then catalyzes an oxidative ring expansion of pretenellin A and 14-hydropretellenin A to form the 2-pyridone core, leading to pretenellin B and pyridovericin, respectively. The cytochrome P450 monooxygenase tenB is then required for the selective N-hydroxylation of the 2-pyridone nitrogen of yield tellinin and 15-hydroxytellenin (15-HT), respectively. The UDP-glucosyltransferase GT1 and the methyltransferase MT1, located outside the tenS gene cluster, contribute to the stepwise glycosylation and methylation of 15-HT to obtain the glycoside pyridovericin-N-O-(4-O-methyl-beta-D-glucopyranoside) (PMGP). Additional related compounds such as 1-O-methyl-15-HT, (8Z)-1-O-methyl-15-HT, and O-methyltenellin A are also produced but the enzymes involved in their biosynthesis have still to be determined. The chain is Cytochrome P450 monooxygenase tenB from Beauveria bassiana (strain ARSEF 2860) (White muscardine disease fungus).